The following is a 120-amino-acid chain: MFLLHEYDIFWTFLIIASLIPILAFSISGLLAPVSEGPEKLSSYESGIEPMGGAWVQFRIRYYMFALVFVVFDVETVFLYPWAMSFDVLGVSVFIEALIFVLILVVGLVYAWRKGALEWS.

3 helical membrane passes run 9 to 29 (IFWT…SISG), 64 to 84 (MFAL…PWAM), and 88 to 108 (VLGV…VVGL).

The protein belongs to the complex I subunit 3 family. As to quaternary structure, NDH is composed of at least 16 different subunits, 5 of which are encoded in the nucleus.

It is found in the plastid. Its subcellular location is the chloroplast thylakoid membrane. The catalysed reaction is a plastoquinone + NADH + (n+1) H(+)(in) = a plastoquinol + NAD(+) + n H(+)(out). It carries out the reaction a plastoquinone + NADPH + (n+1) H(+)(in) = a plastoquinol + NADP(+) + n H(+)(out). NDH shuttles electrons from NAD(P)H:plastoquinone, via FMN and iron-sulfur (Fe-S) centers, to quinones in the photosynthetic chain and possibly in a chloroplast respiratory chain. The immediate electron acceptor for the enzyme in this species is believed to be plastoquinone. Couples the redox reaction to proton translocation, and thus conserves the redox energy in a proton gradient. In Hordeum vulgare (Barley), this protein is NAD(P)H-quinone oxidoreductase subunit 3, chloroplastic.